Reading from the N-terminus, the 180-residue chain is Cancer/testis antigen 1 (180 aa).

Composition is skewed to gly residues over residues 1 to 47 (MQAE…GPRG) and 55 to 66 (GPGGGAPRGPHG). The interval 1–66 (MQAEGRGTGG…GGGAPRGPHG (66 aa)) is disordered.

The protein belongs to the CTAG/PCC1 family. In terms of tissue distribution, expressed in testis and ovary and in a wide variety of cancers. Detected in uterine myometrium. Expressed from 18 weeks until birth in human fetal testis. In the adult testis, is strongly expressed in spermatogonia and in primary spermatocytes, but not in post-meiotic cells or in testicular somatic cells (at protein level).

The protein resides in the cytoplasm. The chain is Cancer/testis antigen 1 (CTAG1A) from Homo sapiens (Human).